We begin with the raw amino-acid sequence, 33 residues long: Brevinin-2HSb (33 aa).

Cysteine 27 and cysteine 33 are disulfide-bonded.

As to expression, expressed by the skin glands.

Its subcellular location is the secreted. In terms of biological role, has antibacterial activity against the Gram-positive bacterium S.aureus ATCC 25923 and the Gram-negative bacterium E.coli ATCC 25726. In Odorrana hosii (Hose's rock frog), this protein is Brevinin-2HSb.